The primary structure comprises 388 residues: Probable serine/threonine-protein kinase PBL20 (388 aa).

Cys-3 is lipidated: S-palmitoyl cysteine. The Protein kinase domain maps to 91 to 372; that stretch reads FSRKLKIGEG…FVVESLTNII (282 aa). ATP-binding positions include 97–105 and Lys-128; that span reads IGEGGFGSV. The Proton acceptor role is filled by Asp-221.

This sequence belongs to the protein kinase superfamily. Ser/Thr protein kinase family.

The protein resides in the cell membrane. The enzyme catalyses L-seryl-[protein] + ATP = O-phospho-L-seryl-[protein] + ADP + H(+). The catalysed reaction is L-threonyl-[protein] + ATP = O-phospho-L-threonyl-[protein] + ADP + H(+). May be involved in plant defense signaling. The chain is Probable serine/threonine-protein kinase PBL20 from Arabidopsis thaliana (Mouse-ear cress).